Reading from the N-terminus, the 1318-residue chain is DNA-directed RNA polymerase subunit beta' (1318 aa).

4 residues coordinate Zn(2+): C60, C62, C75, and C78. Residues D535, D537, and D539 each contribute to the Mg(2+) site. 4 residues coordinate Zn(2+): C890, C967, C974, and C977.

It belongs to the RNA polymerase beta' chain family. The RNAP catalytic core consists of 2 alpha, 1 beta, 1 beta' and 1 omega subunit. When a sigma factor is associated with the core the holoenzyme is formed, which can initiate transcription. Mg(2+) is required as a cofactor. Zn(2+) serves as cofactor.

It carries out the reaction RNA(n) + a ribonucleoside 5'-triphosphate = RNA(n+1) + diphosphate. DNA-dependent RNA polymerase catalyzes the transcription of DNA into RNA using the four ribonucleoside triphosphates as substrates. This chain is DNA-directed RNA polymerase subunit beta', found in Rhodococcus jostii (strain RHA1).